Here is a 246-residue protein sequence, read N- to C-terminus: Nodulin-25 (246 aa).

The N-terminal stretch at Met1 to Ala24 is a signal peptide.

The protein localises to the symbiosome. Its subcellular location is the peribacteroid space. Functionally, involved in the development and function of nodules. It might participate in the biological process of symbiotic nitrogen fixation. The sequence is that of Nodulin-25 (NMS-25) from Medicago sativa (Alfalfa).